A 637-amino-acid chain; its full sequence is MIVFSSLQIRRGVRVLLDNATATINPGQKVGLVGKNGCGKSTLLALLKNEISADGGSYTFPGSWQLAWVNQETPALPQAALEYVIDGDREYRQLEAQLHDANERNDGHAIATIHGKLDAIDAWSIRSRAASLLHGLGFSNEQLERPVSDFSGGWRMRLNLAQALICRSDLLLLDEPTNHLDLDAVIWLEKWLKSYQGTLILISHDRDFLDPIVDKIIHIEQQSMFEYTGNYSSFEVQRATRLAQQQAMYESQQERVAHLQSYIDRFRAKATKAKQAQSRIKMLERMELIAPAHVDNPFRFSFRAPESLPNPLLKMEKVSAGYGDRIILDSIKLNLVPGSRIGLLGRNGAGKSTLIKLLAGELAPVSGEIGLAKGIKLGYFAQHQLEYLRADESPLQHLARLAPQELEQKLRDYLGGFGFQGDKVTEETRRFSGGEKARLVLALIVWQRPNLLLLDEPTNHLDLDMRQALTEALIEFEGALVVVSHDRHLLRSTTDDLYLVHDRKVEPFDGDLEDYQQWLSDVQKQENQTDEAPKENANSAQARKDQKRREAELRAQTQPLRKEIARLEKEMEKLNAQLAQAEEKLGDSELYDQNRKAELTACLQQQASAKSGLEECEMAWLEAQEQLEQMLLEGQSN.

ABC transporter domains follow at residues 2-246 (IVFS…AQQQ) and 313-527 (LKME…KQEN). ATP contacts are provided by residues 34–41 (GKNGCGKS) and 345–352 (GRNGAGKS). The tract at residues 523–559 (QKQENQTDEAPKENANSAQARKDQKRREAELRAQTQP) is disordered. Over residues 542 to 553 (ARKDQKRREAEL) the composition is skewed to basic and acidic residues.

The protein belongs to the ABC transporter superfamily. ABCF family. YheS subfamily.

Its function is as follows. Genetic data indicate it may be involved in ribosome assembly or function. Ectopic expression exacerbates the cold-sensitive growth phenotype of a bipA deletion. This is Probable ATP-binding protein YheS (yheS) from Escherichia coli O6:H1 (strain CFT073 / ATCC 700928 / UPEC).